Reading from the N-terminus, the 367-residue chain is Histone RNA hairpin-binding protein (367 aa).

A compositionally biased stretch (polar residues) spans 1 to 12; that stretch reads MAQKTPTKGTRS. Disordered stretches follow at residues 1–24 and 49–200; these read MAQKTPTKGTRSSPRKKAWGSPIK and EVTE…HWEE. The span at 57 to 73 shows a compositional bias: basic and acidic residues; sequence LASRLEEERRCKSESRR. Positions 147-156 are enriched in polar residues; that stretch reads SNASTINEGA. Residues 183 to 192 are compositionally biased toward low complexity; that stretch reads SDSSSVASSP. The segment at 206–275 is RNA-binding; the sequence is CTDEAVLKRR…KWKRSLYEYC (70 aa). The disordered stretch occupies residues 342–367; sequence MDESTLKASTNTDPSAPTDFSKMSSH. Polar residues predominate over residues 347–356; the sequence is LKASTNTDPS.

The protein belongs to the SLBP family. Post-translationally, ubiquitinated by the CBC(fem-1) (Cul2-ElonginB-ElonginC) E3 ubiquitin-protein ligase complex, leading to its degradation.

In terms of biological role, involved in histone pre-mRNA 3' processing. Required for chromosome condensation, progression of cell death and morphogenesis. The chain is Histone RNA hairpin-binding protein (cdl-1) from Caenorhabditis elegans.